The primary structure comprises 424 residues: Riboflavin biosynthesis protein RibBA (424 aa).

Residues 1 to 206 form a DHBP synthase region; the sequence is MFTCEAGIAS…VDDLITYRYT (206 aa). Residues 32–33, D37, 145–149, and E169 contribute to the D-ribulose 5-phosphate site; these read RE and RPGHT. E33 is a Mg(2+) binding site. Mg(2+) is bound at residue H148. The tract at residues 207–424 is GTP cyclohydrolase II; the sequence is YDSLVTKISS…YETVERMSCR (218 aa). GTP is bound at residue 257 to 261; the sequence is RVHSE. Positions 262, 273, and 275 each coordinate Zn(2+). GTP-binding positions include Q278, 301–303, and T323; that span reads EGR. D335 (proton acceptor; for GTP cyclohydrolase activity) is an active-site residue. R337 acts as the Nucleophile; for GTP cyclohydrolase activity in catalysis. GTP contacts are provided by T358 and K363.

It in the N-terminal section; belongs to the DHBP synthase family. This sequence in the C-terminal section; belongs to the GTP cyclohydrolase II family. The cofactor is Mg(2+). Mn(2+) is required as a cofactor. Zn(2+) serves as cofactor.

It carries out the reaction D-ribulose 5-phosphate = (2S)-2-hydroxy-3-oxobutyl phosphate + formate + H(+). It catalyses the reaction GTP + 4 H2O = 2,5-diamino-6-hydroxy-4-(5-phosphoribosylamino)-pyrimidine + formate + 2 phosphate + 3 H(+). It participates in cofactor biosynthesis; riboflavin biosynthesis; 2-hydroxy-3-oxobutyl phosphate from D-ribulose 5-phosphate: step 1/1. Its pathway is cofactor biosynthesis; riboflavin biosynthesis; 5-amino-6-(D-ribitylamino)uracil from GTP: step 1/4. Functionally, catalyzes the conversion of D-ribulose 5-phosphate to formate and 3,4-dihydroxy-2-butanone 4-phosphate. Its function is as follows. Catalyzes the conversion of GTP to 2,5-diamino-6-ribosylamino-4(3H)-pyrimidinone 5'-phosphate (DARP), formate and pyrophosphate. In Chlamydia trachomatis serovar D (strain ATCC VR-885 / DSM 19411 / UW-3/Cx), this protein is Riboflavin biosynthesis protein RibBA.